The sequence spans 128 residues: Small ribosomal subunit protein eS8 (128 aa).

This sequence belongs to the eukaryotic ribosomal protein eS8 family. As to quaternary structure, part of the 30S ribosomal subunit.

The protein is Small ribosomal subunit protein eS8 of Methanococcus aeolicus (strain ATCC BAA-1280 / DSM 17508 / OCM 812 / Nankai-3).